We begin with the raw amino-acid sequence, 170 residues long: 3-hydroxyanthranilate 3,4-dioxygenase (170 aa).

O2 is bound at residue arginine 44. Residues histidine 48, glutamate 54, and histidine 92 each contribute to the Fe cation site. Glutamate 54 is a substrate binding site. Substrate-binding residues include arginine 96 and glutamate 106. A divalent metal cation-binding residues include cysteine 121, cysteine 124, cysteine 158, and cysteine 161.

Belongs to the 3-HAO family. It depends on Fe(2+) as a cofactor.

The protein localises to the cytoplasm. It catalyses the reaction 3-hydroxyanthranilate + O2 = (2Z,4Z)-2-amino-3-carboxymuconate 6-semialdehyde. It participates in cofactor biosynthesis; NAD(+) biosynthesis; quinolinate from L-kynurenine: step 3/3. Functionally, catalyzes the oxidative ring opening of 3-hydroxyanthranilate to 2-amino-3-carboxymuconate semialdehyde, which spontaneously cyclizes to quinolinate. The protein is 3-hydroxyanthranilate 3,4-dioxygenase of Scheffersomyces stipitis (strain ATCC 58785 / CBS 6054 / NBRC 10063 / NRRL Y-11545) (Yeast).